The sequence spans 157 residues: MFDVLMYLFETYIHTEAELRVDQDKLEQDLTDAGFDREDIYNALLWLEKLADYQEGLAEPMQLASDPLSMRIYTPEECERLDASCRGFLLFLEQIQVINLETREMVIERVLALDTAEFDLEDLKWVILMVLFNIPGCENAYQQMEELLFEVNEGMLH.

Belongs to the Smg family.

In Escherichia coli O6:H1 (strain CFT073 / ATCC 700928 / UPEC), this protein is Protein Smg.